The sequence spans 145 residues: Anaerobic nitrite reductase NSHB5 (145 aa).

Residues 2–142 (GFSETQEELV…LAAAIKEEMK (141 aa)) enclose the Globin domain. The Homodimerization motif lies at 35-39 (EIAPA). Ser45, His59, Lys61, Arg84, Thr88, and His89 together coordinate heme b. Residues 96–108 (DAHFEVVKTALLD) carry the Homodimerization motif.

This sequence belongs to the plant globin family. Homodimer. It depends on heme b as a cofactor. In terms of tissue distribution, expressed in embryonic (embryos, coleoptiles and seminal roots) and vegetative (leaves and roots) organs.

It localises to the cytoplasm. Its subcellular location is the nucleus. The enzyme catalyses Fe(III)-heme b-[protein] + nitric oxide + H2O = Fe(II)-heme b-[protein] + nitrite + 2 H(+). Functionally, phytoglobin that reduces nitrite to nitric oxide under anoxic conditions (e.g. during flooding or in waterlogged soil). May not function as an oxygen storage or transport protein. Has an unusually high affinity for O(2) through an hexacoordinate heme iron because of a very low dissociation constant. The polypeptide is Anaerobic nitrite reductase NSHB5 (Oryza sativa subsp. indica (Rice)).